We begin with the raw amino-acid sequence, 268 residues long: Bidirectional sugar transporter N3 (268 aa).

Residues 1 to 7 (MAISHNT) lie on the Extracellular side of the membrane. Residues 8-28 (LAFTFGMLGNVISFLVFLAPI) traverse the membrane as a helical segment. Residues 10–96 (FTFGMLGNVI…ILYIIYAPRD (87 aa)) enclose the MtN3/slv 1 domain. Topologically, residues 29 to 42 (STFYRIYKKKSTEG) are cytoplasmic. Residues 43 to 63 (FQSLPYLVALFSSMLWLYYAL) form a helical membrane-spanning segment. The Extracellular portion of the chain corresponds to 64 to 70 (LKKDAFL). Residues 71 to 91 (LITINSFGCVVETIYIILYII) form a helical membrane-spanning segment. Over 92–103 (YAPRDARNLTFK) the chain is Cytoplasmic. Residues 104-124 (LLSAMNVGSFALILIVTNYAV) form a helical membrane-spanning segment. Residues 125–131 (HGPLRVQ) lie on the Extracellular side of the membrane. One can recognise a MtN3/slv 2 domain in the interval 131 to 214 (QVLGWVCVSL…QMLLYAIYRN (84 aa)). Residues 132 to 152 (VLGWVCVSLSVSVFAAPLSIV) traverse the membrane as a helical segment. Over 153–165 (AQVVRTKSVEFMP) the chain is Cytoplasmic. The chain crosses the membrane as a helical span at residues 166–186 (FNLSFTLTLSATMWFGYGFFL). Residues 187–190 (KDIC) are Extracellular-facing. Residues 191-211 (IXLPNVLGXVLGLLQMLLYAI) form a helical membrane-spanning segment. Residues 212–268 (YRNGGEKAMKKEKKAPIEPPKSIVIETQLEKIEQEKKNKDDDNEEKDKSEEPIGCGV) lie on the Cytoplasmic side of the membrane. A coiled-coil region spans residues 234 to 262 (IVIETQLEKIEQEKKNKDDDNEEKDKSEE). Residues 243 to 262 (IEQEKKNKDDDNEEKDKSEE) show a composition bias toward basic and acidic residues. The segment at 243–268 (IEQEKKNKDDDNEEKDKSEEPIGCGV) is disordered.

This sequence belongs to the SWEET sugar transporter family. As to quaternary structure, forms homooligomers and/or heterooligomers.

It is found in the cell membrane. Functionally, mediates both low-affinity uptake and efflux of sugar across the plasma membrane. The protein is Bidirectional sugar transporter N3 (N3) of Medicago truncatula (Barrel medic).